The sequence spans 166 residues: Large ribosomal subunit protein uL10 (166 aa).

This sequence belongs to the universal ribosomal protein uL10 family. Part of the ribosomal stalk of the 50S ribosomal subunit. The N-terminus interacts with L11 and the large rRNA to form the base of the stalk. The C-terminus forms an elongated spine to which L12 dimers bind in a sequential fashion forming a multimeric L10(L12)X complex.

Functionally, forms part of the ribosomal stalk, playing a central role in the interaction of the ribosome with GTP-bound translation factors. In Streptococcus pneumoniae serotype 19F (strain G54), this protein is Large ribosomal subunit protein uL10.